The following is a 476-amino-acid chain: Adenylyl cyclase-associated protein 2 (476 aa).

Residues 223–322 (SILSSGPGLP…KSNSPQKHTP (100 aa)) form a disordered region. A compositionally biased stretch (pro residues) spans 230-247 (GLPPPPPPPPPPGPPPPF). Residues 288–299 (KNPSLRAQGQIR) show a composition bias toward polar residues. Phosphoserine occurs at positions 300 and 308. Residues 300–317 (SPTKTHTPSPTSPKSNSP) show a composition bias toward low complexity. One can recognise a C-CAP/cofactor C-like domain in the interval 317–454 (PQKHTPVLEL…QDDDYREFPI (138 aa)).

This sequence belongs to the CAP family. In terms of tissue distribution, expressed in the heart, skeletal muscle, and brain.

The protein resides in the cell membrane. In terms of biological role, involved in the regulation of actin polymerization. This chain is Adenylyl cyclase-associated protein 2 (Cap2), found in Mus musculus (Mouse).